We begin with the raw amino-acid sequence, 428 residues long: Lysophosphatidic acid phosphatase type 6 (428 aa).

A mitochondrion-targeting transit peptide spans 1-32 (MITGVFSMRLWTPVGVLTSLAYCLHQRRVALA). Positions 58-168 (RHGARSPLKP…VFIRSTNIFR (111 aa)) are substrate binding. The active-site Nucleophile is H59. D335 acts as the Proton donor in catalysis.

This sequence belongs to the histidine acid phosphatase family. Monomer. Highly expressed in kidney, heart, small intestine, muscle, liver, prostate, testis, ovary and weakly expressed in thymus and colon.

It is found in the mitochondrion. It catalyses the reaction a phosphate monoester + H2O = an alcohol + phosphate. The catalysed reaction is 1-(9Z-octadecenoyl)-sn-glycero-3-phosphate + H2O = 1-(9Z-octadecenoyl)-sn-glycerol + phosphate. In terms of biological role, hydrolyzes lysophosphatidic acid (LPA) containing a medium length fatty acid chain to the corresponding monoacylglycerol. Has highest activity with lysophosphatidic acid containing myristate (C14:0), monounsaturated oleate (C18:1) or palmitate (C16:0), and lower activity with C18:0 and C6:0 lysophosphatidic acid. The chain is Lysophosphatidic acid phosphatase type 6 (ACP6) from Homo sapiens (Human).